We begin with the raw amino-acid sequence, 395 residues long: Phosphoglycerate kinase (395 aa).

Substrate is bound by residues 21–23, Arg36, 59–62, Arg120, and Arg153; these read DFN and HLGR. Residues Lys203, Glu325, and 351–354 contribute to the ATP site; that span reads GGDS.

The protein belongs to the phosphoglycerate kinase family. As to quaternary structure, monomer.

It localises to the cytoplasm. The catalysed reaction is (2R)-3-phosphoglycerate + ATP = (2R)-3-phospho-glyceroyl phosphate + ADP. It participates in carbohydrate degradation; glycolysis; pyruvate from D-glyceraldehyde 3-phosphate: step 2/5. This is Phosphoglycerate kinase from Roseiflexus castenholzii (strain DSM 13941 / HLO8).